The following is a 241-amino-acid chain: Triosephosphate isomerase (241 aa).

Residue Asn9 to Lys11 coordinates substrate. Residue His96 is the Electrophile of the active site. Glu165 acts as the Proton acceptor in catalysis. Substrate is bound by residues Gly171, Ser204, and Gly225–Gly226.

Belongs to the triosephosphate isomerase family. In terms of assembly, homodimer.

The protein resides in the cytoplasm. The enzyme catalyses D-glyceraldehyde 3-phosphate = dihydroxyacetone phosphate. Its pathway is carbohydrate biosynthesis; gluconeogenesis. It participates in carbohydrate degradation; glycolysis; D-glyceraldehyde 3-phosphate from glycerone phosphate: step 1/1. Its function is as follows. Involved in the gluconeogenesis. Catalyzes stereospecifically the conversion of dihydroxyacetone phosphate (DHAP) to D-glyceraldehyde-3-phosphate (G3P). The protein is Triosephosphate isomerase of Trichormus variabilis (strain ATCC 29413 / PCC 7937) (Anabaena variabilis).